We begin with the raw amino-acid sequence, 322 residues long: tRNA-specific adenosine deaminase subunit TAD3 (322 aa).

In terms of domain architecture, CMP/dCMP-type deaminase spans 162 to 283 (EVRNELSRAS…EMQRTGSLKL (122 aa)). Zn(2+) is bound by residues histidine 216, cysteine 254, cysteine 257, and cysteine 322.

This sequence belongs to the cytidine and deoxycytidylate deaminase family. ADAT3 subfamily. As to quaternary structure, heterodimer with TAD2.

The protein resides in the cytoplasm. It localises to the nucleus. It is found in the peroxisome. Functionally, structural subunit of tRNA-specific adenosine deaminase, which deaminates adenosine-34 (the first, also called wobble position of the anticodon) to inosine in many tRNAs. Inosine-34 allows the decoding of 3 different nucleotides at the third position of mRNA codons, as inosine is able to pair with U, C, and A. The protein is tRNA-specific adenosine deaminase subunit TAD3 (TAD3) of Saccharomyces cerevisiae (strain ATCC 204508 / S288c) (Baker's yeast).